Here is a 181-residue protein sequence, read N- to C-terminus: Protoporphyrinogen IX dehydrogenase [quinone] (181 aa).

Residues 3–172 enclose the Flavodoxin-like domain; that stretch reads TLILFSTRDG…QVANFAREIA (170 aa). Residues 9–13 and 84–152 contribute to the FMN site; these read TRDGQ and FYSV…ETDT.

It belongs to the HemG family. It depends on FMN as a cofactor.

It is found in the cell inner membrane. It catalyses the reaction protoporphyrinogen IX + 3 a menaquinone = protoporphyrin IX + 3 a menaquinol. The catalysed reaction is protoporphyrinogen IX + 3 a ubiquinone = protoporphyrin IX + 3 a ubiquinol. It carries out the reaction protoporphyrinogen IX + 3 a quinone = protoporphyrin IX + 3 a quinol. It participates in porphyrin-containing compound metabolism; protoporphyrin-IX biosynthesis; protoporphyrin-IX from protoporphyrinogen-IX: step 1/1. Functionally, catalyzes the 6-electron oxidation of protoporphyrinogen IX to form protoporphyrin IX; under anaerobic conditions uses menaquinone as an electron acceptor, under aerobic condition uses ubiquinone as an electron acceptor. The polypeptide is Protoporphyrinogen IX dehydrogenase [quinone] (Escherichia coli O157:H7).